A 369-amino-acid chain; its full sequence is MSDWDKTMDLLFGFVTGHIHSRMFETILKFSICDLLEDGPKHYSEISKIIGFKNESYCYRLMRYFVPYKLFNESVVQVGLFSKTPSSTQFSKNGTLKNLGRFHCQDHHYRIFESLPKTLEMGKNQGPSSIGLSSFWEHFETDESYKQLFHNAMKDYTSLIIDRLISKISLSPNFKTVVDIGGSHGFLIGKLLESNPNIHGINFDLENIINSSTSKNENFQHPRLKHVSGDFFNSVPEADCYILKYILHDWSDEKCITILNNIHKSLKPNGKLFINDLVLDPSNYTKEAVFKDILMMQYFDAKERSINEWHQLFEKCGFKIDSVDTSISPQLMIVSKINSSNINLNDCTNFNSEIVEEKLKNSLPQFVNC.

Residues Gly-181, Asp-204, 229-231, Asp-230, Phe-231, and Lys-244 contribute to the S-adenosyl-L-methionine site; that span reads GDF. His-248 functions as the Proton acceptor in the catalytic mechanism.

This sequence belongs to the class I-like SAM-binding methyltransferase superfamily. Cation-independent O-methyltransferase family. COMT subfamily.

The catalysed reaction is resorcinol + S-adenosyl-L-methionine = 3-methoxyphenol + S-adenosyl-L-homocysteine + H(+). Its function is as follows. S-adenosyl-L-methionine dependent O-methyltransferase that may be involved in modifying resorcinol ring to synthesize a variant of 4-methyl-5-pentylbenzene-1,3-diol. This Dictyostelium discoideum (Social amoeba) protein is O-methyltransferase 12 (omt12).